A 391-amino-acid chain; its full sequence is Extracellular metalloproteinase 3 (391 aa).

Positions 1–9 (HNVVDYVAS) are excised as a propeptide. Asparagine 173 is a glycosylation site (N-linked (GlcNAc...) asparagine). Histidine 192 lines the Zn(2+) pocket. Glutamate 193 is an active-site residue. Residue histidine 196 participates in Zn(2+) binding. Asparagine 243 and asparagine 385 each carry an N-linked (GlcNAc...) asparagine glycan.

This sequence belongs to the peptidase M36 family. Zn(2+) is required as a cofactor.

The protein resides in the secreted. Secreted metalloproteinase probably acting as a virulence factor. The chain is Extracellular metalloproteinase 3 (MEP3) from Trichophyton soudanense.